We begin with the raw amino-acid sequence, 431 residues long: Na(+)/H(+) antiporter NhaA (431 aa).

11 consecutive transmembrane segments (helical) span residues 33–53 (VGGA…NSPW), 74–94 (LSIS…VVGV), 112–132 (ALPI…FVGV), 144–164 (GWAI…AVIA), 173–193 (IFLL…IAVF), 197–217 (QLSF…GLAV), 225–245 (FLLL…GVHA), 279–299 (FAVP…LSGF), 311–331 (VIAG…YVLA), 347–367 (VLGL…IGEL), and 379–399 (AKIA…VVLL).

It belongs to the NhaA Na(+)/H(+) (TC 2.A.33) antiporter family.

It localises to the cell membrane. It carries out the reaction Na(+)(in) + 2 H(+)(out) = Na(+)(out) + 2 H(+)(in). In terms of biological role, na(+)/H(+) antiporter that extrudes sodium in exchange for external protons. The polypeptide is Na(+)/H(+) antiporter NhaA (Mycolicibacterium smegmatis (strain ATCC 700084 / mc(2)155) (Mycobacterium smegmatis)).